The chain runs to 235 residues: tRNA (adenine(37)-N6)-methyltransferase (235 aa).

A TsaA-like domain is found at 6–147 (FEQIGVIRSP…YLPFAESLPD (142 aa)). Residues 23–25 (PRQ), 64–65 (HQ), arginine 92, and 127–130 (VDGT) each bind S-adenosyl-L-methionine.

It belongs to the tRNA methyltransferase O family. Homodimer.

It catalyses the reaction N(6)-L-threonylcarbamoyladenosine(37) in tRNA + S-adenosyl-L-methionine = N(6)-methyl,N(6)-L-threonylcarbamoyladenosine(37) in tRNA + S-adenosyl-L-homocysteine + H(+). S-adenosyl-L-methionine-dependent methyltransferase responsible for the addition of the methyl group in the formation of N6-methyl-N6-threonylcarbamoyladenosine at position 37 (m(6)t(6)A37) of the tRNA anticodon loop of tRNA(Thr)(GGU) that read codons starting with adenosine. The methyl group of m(6)t(6)A37 appears to slightly improve the efficiency of the tRNA decoding ability. This Escherichia coli (strain K12) protein is tRNA (adenine(37)-N6)-methyltransferase.